Here is a 350-residue protein sequence, read N- to C-terminus: Histidinol-phosphate aminotransferase (350 aa).

Lys-209 carries the post-translational modification N6-(pyridoxal phosphate)lysine.

This sequence belongs to the class-II pyridoxal-phosphate-dependent aminotransferase family. Histidinol-phosphate aminotransferase subfamily. Homodimer. Requires pyridoxal 5'-phosphate as cofactor.

It carries out the reaction L-histidinol phosphate + 2-oxoglutarate = 3-(imidazol-4-yl)-2-oxopropyl phosphate + L-glutamate. It participates in amino-acid biosynthesis; L-histidine biosynthesis; L-histidine from 5-phospho-alpha-D-ribose 1-diphosphate: step 7/9. The polypeptide is Histidinol-phosphate aminotransferase (Geobacter sp. (strain M21)).